A 145-amino-acid chain; its full sequence is Large ribosomal subunit protein cL37 (145 aa).

The N-terminal 63 residues, Met1–Ser63, are a transit peptide targeting the chloroplast. Residues Lys125 to Val145 form a disordered region.

It belongs to the chloroplast-specific ribosomal protein cL37 family. In terms of assembly, part of the 50S ribosomal subunit.

It localises to the plastid. It is found in the chloroplast. The chain is Large ribosomal subunit protein cL37 (PSRP5) from Pisum sativum (Garden pea).